Here is a 118-residue protein sequence, read N- to C-terminus: Holo-[acyl-carrier-protein] synthase (118 aa).

Residues Asp-5 and Glu-50 each contribute to the Mg(2+) site.

The protein belongs to the P-Pant transferase superfamily. AcpS family. The cofactor is Mg(2+).

Its subcellular location is the cytoplasm. The enzyme catalyses apo-[ACP] + CoA = holo-[ACP] + adenosine 3',5'-bisphosphate + H(+). Functionally, transfers the 4'-phosphopantetheine moiety from coenzyme A to a Ser of acyl-carrier-protein. This Aliarcobacter butzleri (strain RM4018) (Arcobacter butzleri) protein is Holo-[acyl-carrier-protein] synthase.